The chain runs to 272 residues: Ethanolamine ammonia-lyase small subunit (272 aa).

The adenosylcob(III)alamin site is built by V161, E182, and C211.

Belongs to the EutC family. The basic unit is a heterodimer which dimerizes to form tetramers. The heterotetramers trimerize; 6 large subunits form a core ring with 6 small subunits projecting outwards. Adenosylcob(III)alamin is required as a cofactor.

Its subcellular location is the bacterial microcompartment. It carries out the reaction ethanolamine = acetaldehyde + NH4(+). It functions in the pathway amine and polyamine degradation; ethanolamine degradation. Catalyzes the deamination of various vicinal amino-alcohols to oxo compounds. Allows this organism to utilize ethanolamine as the sole source of nitrogen and carbon in the presence of external vitamin B12. In Pseudomonas putida (strain ATCC 700007 / DSM 6899 / JCM 31910 / BCRC 17059 / LMG 24140 / F1), this protein is Ethanolamine ammonia-lyase small subunit.